Reading from the N-terminus, the 149-residue chain is Large ribosomal subunit protein uL22c (149 aa).

Belongs to the universal ribosomal protein uL22 family. Part of the 50S ribosomal subunit.

The protein resides in the plastid. It is found in the chloroplast. In terms of biological role, this protein binds specifically to 23S rRNA. The globular domain of the protein is located near the polypeptide exit tunnel on the outside of the subunit, while an extended beta-hairpin is found that lines the wall of the exit tunnel in the center of the 70S ribosome. This chain is Large ribosomal subunit protein uL22c (rpl22), found in Oryza nivara (Indian wild rice).